The chain runs to 77 residues: Large ribosomal subunit protein bL31 (77 aa).

Belongs to the bacterial ribosomal protein bL31 family. Type A subfamily. In terms of assembly, part of the 50S ribosomal subunit.

Its function is as follows. Binds the 23S rRNA. In Synechococcus elongatus (strain ATCC 33912 / PCC 7942 / FACHB-805) (Anacystis nidulans R2), this protein is Large ribosomal subunit protein bL31.